Here is a 505-residue protein sequence, read N- to C-terminus: Trans-cinnamate 4-monooxygenase (505 aa).

A helical transmembrane segment spans residues 3–23; it reads LLLLEKTLLALFIAATIAITI. Residues 212–217 and alanine 305 each bind (E)-cinnamate; that span reads RSRLAQ. Cysteine 446 is a binding site for heme.

It belongs to the cytochrome P450 family. Heme is required as a cofactor.

Its subcellular location is the membrane. The catalysed reaction is (E)-cinnamate + reduced [NADPH--hemoprotein reductase] + O2 = (E)-4-coumarate + oxidized [NADPH--hemoprotein reductase] + H2O + H(+). The protein operates within phenylpropanoid metabolism; trans-4-coumarate biosynthesis; trans-4-coumarate from trans-cinnamate: step 1/1. Its function is as follows. Catalyzes the first oxidative step of the phenylpropanoid pathway in higher plants by transforming trans-cinnamate into p-coumarate. The compounds formed by this pathway are essential components for lignification, pollination, and defense against ultraviolet light, predators and pathogens. The chain is Trans-cinnamate 4-monooxygenase (CYP73A19) from Cicer arietinum (Chickpea).